Here is an 85-residue protein sequence, read N- to C-terminus: uncharacterized protein (85 aa).

Residues 39-59 (FILFEISMYIIFIVTFCYKII) traverse the membrane as a helical segment.

Its subcellular location is the host membrane. This is an uncharacterized protein from Gallid herpesvirus 2 (strain Chicken/Md5/ATCC VR-987) (GaHV-2).